The following is a 1086-amino-acid chain: Endo-1,4-beta-xylanase C (1086 aa).

A signal peptide spans 1–31 (MRGKWLRLCLAAVLIVSLLPGLGAGEWKASA). 2 CBM-cenC domains span residues 35–183 (GDIL…IRLV) and 197–359 (GQAL…ITAT). The region spanning 365–710 (EKNIPDLAKK…KPAYWALVDP (346 aa)) is the GH10 domain. The Proton donor role is filled by glutamate 502. Aspartate 556 is a catalytic residue. The active-site Nucleophile is the glutamate 620.

It belongs to the glycosyl hydrolase 10 (cellulase F) family.

It catalyses the reaction Endohydrolysis of (1-&gt;4)-beta-D-xylosidic linkages in xylans.. Its pathway is glycan degradation; xylan degradation. Its function is as follows. Endoxylanase with high hydrolytic activity on birchwood and oat spelt xylan. Xylotetraose, xylotriose, xylobiose and xylose are the main products from birchwood xylan hydrolysis. Shows increasing activity on xylo-oligosaccharides of increasing length. Displays very low hydrolytic activity on Avicel, carboxymethylcellulose (CMC) and p-nitrophenyl-beta-xylopyranoside. Also shows transxylosidase activity, allowing the formation of xylo-oligosaccharides of higher degree of polymerization than the starting substrate. The chain is Endo-1,4-beta-xylanase C (xynC) from Paenibacillus barcinonensis.